We begin with the raw amino-acid sequence, 362 residues long: Chalcone synthase A (362 aa).

C168 is an active-site residue.

Belongs to the thiolase-like superfamily. Chalcone/stilbene synthases family.

The catalysed reaction is (E)-4-coumaroyl-CoA + 3 malonyl-CoA + 3 H(+) = 2',4,4',6'-tetrahydroxychalcone + 3 CO2 + 4 CoA. Its pathway is secondary metabolite biosynthesis; flavonoid biosynthesis. In terms of biological role, the primary product of this enzyme is 4,2',4',6'-tetrahydroxychalcone (also termed naringenin-chalcone or chalcone) which can under specific conditions spontaneously isomerize into naringenin. The polypeptide is Chalcone synthase A (CHSA) (Ipomoea trifida (Morning glory)).